A 296-amino-acid polypeptide reads, in one-letter code: MSATVSTVSADLHKAIDAGDEDKITKITASYGSEQRDKIIPAYHANYGIPPSEAIRKAFKTGFYETMIVHAWTSRFELRAKLIHESIKGKIDVITLLDLVIACMPDDWYGTKVCYTKLYGRELVREIDEVIGVGTPWQSLVSGWVKHDRKYRKSIKSDAEAFRMALDSDNYEVLGSMLATSVPDEWMRIAAAYEETTGMPIDQAIASRYVKVDQTALILAHHWLCDPGQAAAYICSQCCAERKGNYARICRFTSMMYDHCLKCKYAYRAYGSLAMDIRKCFEPKLAKHLLVFWRVE.

Annexin repeat units follow at residues 3–72, 74–146, 153–223, and 226–294; these read ATVS…VHAW, SRFE…GWVK, KSIK…AHHW, and DPGQ…VFWR.

The protein belongs to the annexin family. Giardin subunit alpha subfamily.

It is found in the cytoplasm. The protein localises to the cytoskeleton. Functionally, giardins are involved in parasite attachment to the intestinal mucosa and in the cytoskeletal disassembly and reassembly that marks the transition from infectious trophozoite to transmissible cyst. They may interact with other cytoskeletal proteins such as microtubules in the microribbons or crossbridges, to maintain the integrity of the ventral disk. This is Giardin subunit alpha-4 from Giardia intestinalis (Giardia lamblia).